The chain runs to 243 residues: Carboxy-S-adenosyl-L-methionine synthase (243 aa).

Residues tyrosine 40, 65–67 (GCS), 90–91 (DN), 118–119 (DI), asparagine 133, and arginine 200 each bind S-adenosyl-L-methionine.

The protein belongs to the class I-like SAM-binding methyltransferase superfamily. Cx-SAM synthase family. Homodimer.

The catalysed reaction is prephenate + S-adenosyl-L-methionine = carboxy-S-adenosyl-L-methionine + 3-phenylpyruvate + H2O. Its function is as follows. Catalyzes the conversion of S-adenosyl-L-methionine (SAM) to carboxy-S-adenosyl-L-methionine (Cx-SAM). The sequence is that of Carboxy-S-adenosyl-L-methionine synthase from Shewanella baltica (strain OS155 / ATCC BAA-1091).